A 161-amino-acid chain; its full sequence is ATP synthase subunit b 2 (161 aa).

A helical transmembrane segment spans residues 13 to 33 (IVWLVIALVAMYFVMSRLAIP).

Belongs to the ATPase B chain family. F-type ATPases have 2 components, F(1) - the catalytic core - and F(0) - the membrane proton channel. F(1) has five subunits: alpha(3), beta(3), gamma(1), delta(1), epsilon(1). F(0) has three main subunits: a(1), b(2) and c(10-14). The alpha and beta chains form an alternating ring which encloses part of the gamma chain. F(1) is attached to F(0) by a central stalk formed by the gamma and epsilon chains, while a peripheral stalk is formed by the delta and b chains.

It is found in the cell inner membrane. F(1)F(0) ATP synthase produces ATP from ADP in the presence of a proton or sodium gradient. F-type ATPases consist of two structural domains, F(1) containing the extramembraneous catalytic core and F(0) containing the membrane proton channel, linked together by a central stalk and a peripheral stalk. During catalysis, ATP synthesis in the catalytic domain of F(1) is coupled via a rotary mechanism of the central stalk subunits to proton translocation. Functionally, component of the F(0) channel, it forms part of the peripheral stalk, linking F(1) to F(0). The b'-subunit is a diverged and duplicated form of b found in plants and photosynthetic bacteria. The chain is ATP synthase subunit b 2 (atpF2) from Rhodospirillum rubrum (strain ATCC 11170 / ATH 1.1.1 / DSM 467 / LMG 4362 / NCIMB 8255 / S1).